A 392-amino-acid polypeptide reads, in one-letter code: LL-diaminopimelate aminotransferase (392 aa).

The substrate site is built by Y15, G40, K104, Y128, and N178. Pyridoxal 5'-phosphate contacts are provided by residues 103–104 (SK), Y128, N178, Y209, and 237–239 (SVS). Position 240 is an N6-(pyridoxal phosphate)lysine (K240). R248 contributes to the pyridoxal 5'-phosphate binding site. R366 is a binding site for substrate.

It belongs to the class-I pyridoxal-phosphate-dependent aminotransferase family. LL-diaminopimelate aminotransferase subfamily. In terms of assembly, homodimer. Requires pyridoxal 5'-phosphate as cofactor.

It catalyses the reaction (2S,6S)-2,6-diaminopimelate + 2-oxoglutarate = (S)-2,3,4,5-tetrahydrodipicolinate + L-glutamate + H2O + H(+). The protein operates within amino-acid biosynthesis; L-lysine biosynthesis via DAP pathway; LL-2,6-diaminopimelate from (S)-tetrahydrodipicolinate (aminotransferase route): step 1/1. Involved in the synthesis of meso-diaminopimelate (m-DAP or DL-DAP), required for both lysine and peptidoglycan biosynthesis. Catalyzes the direct conversion of tetrahydrodipicolinate to LL-diaminopimelate. The chain is LL-diaminopimelate aminotransferase from Desulforudis audaxviator (strain MP104C).